Consider the following 1015-residue polypeptide: SKI family transcriptional corepressor 2 (1015 aa).

Disordered regions lie at residues His280–Asp316 and Gly518–Val934. Positions Ala284–Leu295 are enriched in pro residues. A compositionally biased stretch (low complexity) spans Pro575–Pro600. The segment covering Gly628 to Ala637 has biased composition (basic and acidic residues). Residues His653–Pro669 show a composition bias toward basic residues. Composition is skewed to pro residues over residues Pro670–Asp684 and Ala694–Ala708. Composition is skewed to acidic residues over residues Asp730–Asp745 and Gly754–Glu774. A compositionally biased stretch (basic and acidic residues) spans Pro793 to Ala803. Over residues Asp832–Ala842 the composition is skewed to pro residues. Composition is skewed to basic and acidic residues over residues Pro861–Glu877, Thr885–Ser899, and Phe912–Gln922.

The protein belongs to the SKI family. As to quaternary structure, interacts with SMAD2 and SMAD3. As to expression, expressed in cerebellum, spinal cord and testis. Isoform 2 is present in cerebellum (at protein level).

Its subcellular location is the nucleus. It is found in the cytoplasm. In terms of biological role, exhibits transcriptional repressor activity. Acts as a TGF-beta antagonist in the nervous system. The chain is SKI family transcriptional corepressor 2 from Homo sapiens (Human).